We begin with the raw amino-acid sequence, 361 residues long: Divinyl chlorophyll a/b light-harvesting protein PcbE (361 aa).

6 helical membrane-spanning segments follow: residues 27 to 47 (FIGS…ANTL), 88 to 108 (VAFV…AGLL), 149 to 169 (FILG…VEWA), 210 to 230 (VMGG…FHIA), 250 to 270 (AVLS…AFWC), and 315 to 335 (LSNV…WHAI).

It belongs to the PsbB/PsbC family. IsiA/Pcb subfamily. In terms of assembly, the antenna complex consists of divinyl chlorophylls (a and b) and divinyl chlorophyll a/b binding proteins and binds more divinyl chlorophyll b than does the antenna complex from high-light-adapted Prochlorococcus. It depends on divinyl chlorophyll a as a cofactor. Divinyl chlorophyll b is required as a cofactor.

It localises to the cellular thylakoid membrane. Functionally, the antenna complex functions as a light receptor, it captures and delivers excitation energy to photosystems II and I. The Prochlorales pcb genes are not related to higher plant LHCs. This Prochlorococcus marinus (strain SARG / CCMP1375 / SS120) protein is Divinyl chlorophyll a/b light-harvesting protein PcbE (pcbE).